Consider the following 186-residue polypeptide: ADP-ribosylation factor-like protein 8A (186 aa).

The segment at residues M1–E19 is an intramembrane region (note=Mediates targeting to membranes). GTP contacts are provided by residues Q29–T35, D71–Q75, and N130–D133.

It belongs to the small GTPase superfamily. Arf family. Interacts with PLEKHM1. When GTP-bound, interacts with RUFY3 and RUFY4, but not with RUFY1, nor RUFY2.

It is found in the late endosome membrane. The protein resides in the lysosome membrane. Its subcellular location is the cytoplasm. The protein localises to the cytoskeleton. It localises to the spindle. It is found in the cell projection. The protein resides in the axon. Its subcellular location is the synapse. Plays a role in lysosomes motility. In neurons, mediates the anterograde axonal long-range transport of presynaptic lysosome-related vesicles required for presynaptic biogenesis and synaptic function. May play a role in chromosome segregation. The polypeptide is ADP-ribosylation factor-like protein 8A (Arl8a) (Mus musculus (Mouse)).